Consider the following 240-residue polypeptide: Venom hemolysin-like protein 1 (240 aa).

The signal sequence occupies residues 1–18 (MQYKLILLVVGLFQASLA). A disordered region spans residues 25–50 (ESVPHPSKDVAPPDTQDSSTQTEVTT). Polar residues predominate over residues 39-50 (TQDSSTQTEVTT).

Expressed by the venom gland (anterior main gland) (at protein level).

It is found in the secreted. The sequence is that of Venom hemolysin-like protein 1 from Platymeris rhadamanthus (Red spot assassin bug).